The chain runs to 508 residues: Ras association domain-containing protein 10 (508 aa).

Residues 1 to 133 enclose the Ras-associating domain; the sequence is MDPSEKKISV…VRFVLVRSEA (133 aa). 2 disordered regions span residues 51–81 and 186–221; these read RRGL…AMPP and KLNR…ESAS. The segment covering 66–78 has biased composition (acidic residues); it reads EPPDENDEDDDDA. Residues 195-214 are compositionally biased toward low complexity; it reads PSSPCSSTSSSTASSCSSSA. Coiled coils occupy residues 235 to 266 and 319 to 358; these read QDHT…DRMR and LEEL…NQRW. Residues 473 to 508 form a disordered region; sequence GLAKSCPGNDEDSDTGLSSMHSQDSDSVPPVCESLV. Polar residues predominate over residues 487–498; that stretch reads TGLSSMHSQDSD.

As to expression, expressed in neural progenitor cells (at protein level).

The protein localises to the cytoplasm. It is found in the cytosol. The protein resides in the cytoskeleton. It localises to the microtubule organizing center. Its subcellular location is the centrosome. The protein localises to the spindle pole. In terms of biological role, plays an important role in regulating embryonic neurogenesis. The sequence is that of Ras association domain-containing protein 10 (Rassf10) from Mus musculus (Mouse).